The primary structure comprises 144 residues: Testis-specific protein TSX (144 aa).

Disordered stretches follow at residues 1–21 (MSEK…DLPE), 69–99 (EDRV…RDID), and 120–144 (FTDQ…NPTD). Over residues 75 to 90 (TDDEDTCQAGCTEDDE) the composition is skewed to acidic residues.

As to expression, testis.

Functionally, may have an RNA/DNA binding role. This chain is Testis-specific protein TSX (Tsx), found in Mus musculus (Mouse).